The following is a 365-amino-acid chain: Probable L-tyrosine/L-aspartate decarboxylase (365 aa).

An N6-(pyridoxal phosphate)lysine modification is found at K224.

It belongs to the group II decarboxylase family. MfnA subfamily. Pyridoxal 5'-phosphate serves as cofactor.

The enzyme catalyses L-tyrosine + H(+) = tyramine + CO2. The catalysed reaction is L-aspartate + H(+) = beta-alanine + CO2. It participates in cofactor biosynthesis; methanofuran biosynthesis. Its pathway is cofactor biosynthesis; coenzyme A biosynthesis. Its function is as follows. Catalyzes the decarboxylation of L-tyrosine to produce tyramine for methanofuran biosynthesis. Can also catalyze the decarboxylation of L-aspartate to produce beta-alanine for coenzyme A (CoA) biosynthesis. The chain is Probable L-tyrosine/L-aspartate decarboxylase from Methanoregula boonei (strain DSM 21154 / JCM 14090 / 6A8).